We begin with the raw amino-acid sequence, 333 residues long: Mycothiol acetyltransferase (333 aa).

2 consecutive N-acetyltransferase domains span residues 18–170 (PTLS…LPEP) and 176–333 (VTVR…AAAD). 1D-myo-inositol 2-(L-cysteinylamino)-2-deoxy-alpha-D-glucopyranoside is bound at residue glutamate 46. Residue 98-100 (IVV) coordinates acetyl-CoA. Residues glutamate 203, lysine 242, and glutamate 261 each contribute to the 1D-myo-inositol 2-(L-cysteinylamino)-2-deoxy-alpha-D-glucopyranoside site. Acetyl-CoA-binding positions include 265-267 (VGV) and 272-278 (GGAGLGR). 1D-myo-inositol 2-(L-cysteinylamino)-2-deoxy-alpha-D-glucopyranoside is bound at residue tyrosine 299. Residue 304–309 (NERAVR) coordinates acetyl-CoA.

This sequence belongs to the acetyltransferase family. MshD subfamily. Monomer.

The catalysed reaction is 1D-myo-inositol 2-(L-cysteinylamino)-2-deoxy-alpha-D-glucopyranoside + acetyl-CoA = mycothiol + CoA + H(+). In terms of biological role, catalyzes the transfer of acetyl from acetyl-CoA to desacetylmycothiol (Cys-GlcN-Ins) to form mycothiol. This is Mycothiol acetyltransferase from Frankia alni (strain DSM 45986 / CECT 9034 / ACN14a).